The sequence spans 465 residues: GTPase Der (465 aa).

2 EngA-type G domains span residues 3 to 167 (PLVA…PEEG) and 179 to 352 (IRIA…ESAN). GTP contacts are provided by residues 9 to 16 (GRPNVGKS), 57 to 61 (DTGGI), 119 to 122 (NKID), 185 to 192 (GRPNVGKS), 232 to 236 (DTAGL), and 297 to 300 (NKWD). The KH-like domain occupies 353–437 (KTFTTSEVNK…PVSFIFREGT (85 aa)).

It belongs to the TRAFAC class TrmE-Era-EngA-EngB-Septin-like GTPase superfamily. EngA (Der) GTPase family. In terms of assembly, associates with the 50S ribosomal subunit.

GTPase that plays an essential role in the late steps of ribosome biogenesis. This chain is GTPase Der, found in Stenotrophomonas maltophilia (strain K279a).